Consider the following 222-residue polypeptide: N-(5'-phosphoribosyl)anthranilate isomerase (222 aa).

It belongs to the TrpF family.

The catalysed reaction is N-(5-phospho-beta-D-ribosyl)anthranilate = 1-(2-carboxyphenylamino)-1-deoxy-D-ribulose 5-phosphate. It functions in the pathway amino-acid biosynthesis; L-tryptophan biosynthesis; L-tryptophan from chorismate: step 3/5. In Rhizobium etli (strain ATCC 51251 / DSM 11541 / JCM 21823 / NBRC 15573 / CFN 42), this protein is N-(5'-phosphoribosyl)anthranilate isomerase.